Reading from the N-terminus, the 435-residue chain is UPF0053 protein Rv2366c (435 aa).

The region spanning M1 to E185 is the CNNM transmembrane domain. Transmembrane regions (helical) follow at residues L7 to I27 and V89 to V109. 2 consecutive CBS domains span residues M204–T267 and V272–E329.

It belongs to the UPF0053 family.

The protein localises to the cell membrane. In Mycobacterium tuberculosis (strain ATCC 25618 / H37Rv), this protein is UPF0053 protein Rv2366c.